Reading from the N-terminus, the 431-residue chain is Glutamate-1-semialdehyde 2,1-aminomutase (431 aa).

The residue at position 269 (K269) is an N6-(pyridoxal phosphate)lysine.

The protein belongs to the class-III pyridoxal-phosphate-dependent aminotransferase family. HemL subfamily. In terms of assembly, homodimer. Pyridoxal 5'-phosphate serves as cofactor.

Its subcellular location is the cytoplasm. It catalyses the reaction (S)-4-amino-5-oxopentanoate = 5-aminolevulinate. It participates in porphyrin-containing compound metabolism; protoporphyrin-IX biosynthesis; 5-aminolevulinate from L-glutamyl-tRNA(Glu): step 2/2. The protein operates within porphyrin-containing compound metabolism; chlorophyll biosynthesis. The chain is Glutamate-1-semialdehyde 2,1-aminomutase from Chlorobium phaeobacteroides (strain BS1).